The following is a 379-amino-acid chain: MATWNASSPAASPCSSRRRTKAPARRPSSESPPPRKMKSMAEIMAKSVPVVEQEEEEDEDSYSNVTCEKCGSGEGDDELLLCDKCDRGFHMKCLRPIVVRVPIGTWLCVDCSDQRPVRRLSQKKILHFFRIEKHTHQTDKLELSQEETRKRRRSCSLTVKKRRRKLLPLVPSEDPDQRLAQMGTLASALTALGIKYSDGLNYVPGMAPRSANQSKLEKGGMQVLCKEDLETLEQCQSMYRRGECPPLVVVFDPLEGYTVEADGPIKDLTFIAEYTGDVDYLKNREKDDCDSIMTLLLSEDPSKTLVICPDKFGNISRFINGINNHNPVAKKKQNCKCVRYSINGECRVLLVATRDISKGERLYYDYNGYEHEYPTHHFL.

Residues 1 to 15 (MATWNASSPAASPCS) are compositionally biased toward low complexity. The segment at 1 to 42 (MATWNASSPAASPCSSRRRTKAPARRPSSESPPPRKMKSMAE) is disordered. A chloroplast-targeting transit peptide spans 1–44 (MATWNASSPAASPCSSRRRTKAPARRPSSESPPPRKMKSMAEIM). A PHD-type zinc finger spans residues 64–114 (NVTCEKCGSGEGDDELLLCDKCDRGFHMKCLRPIVVRVPIGTWLCVDCSDQ). Residues 122-129 (QKKILHFF) carry the PIP motif motif. Residue Met221 coordinates substrate. Residues 245–367 (PPLVVVFDPL…KGERLYYDYN (123 aa)) enclose the SET domain. Residues 255–257 (EGY) and 317–321 (RFING) contribute to the S-adenosyl-L-methionine site. Arg339 contacts substrate. Residue Tyr366 coordinates S-adenosyl-L-methionine. 369 to 370 (YE) contacts substrate. Tyr373 contributes to the S-adenosyl-L-methionine binding site.

It belongs to the class V-like SAM-binding methyltransferase superfamily. Histone-lysine methyltransferase family. TRX/MLL subfamily. Isoform 1 but not isoform 2 interacts with PCNA1 and PCNA2. Interacts (via PHD domain) with HTR1 (via N-terminus). Isoform 2 interacts with IPS1. Expressed in leaves, roots, stems, flowers, siliques and developing pollen. Up-regulated in tissues where cell division is active.

It is found in the nucleus. The protein localises to the plastid. Its subcellular location is the chloroplast. It catalyses the reaction L-lysyl(27)-[histone H3] + S-adenosyl-L-methionine = N(6)-methyl-L-lysyl(27)-[histone H3] + S-adenosyl-L-homocysteine + H(+). Functionally, histone methyltransferase that specifically monomethylates 'Lys-27' of histone H3 (H3K27me1). Has much higher activity on nucleosomes containing H3.1 than H3.3. Involved in the formation of constitutive heterochromatin and the silencing of heterochromatic elements. Influences which sets of rRNA gene variants are expressed or silenced. This Arabidopsis thaliana (Mouse-ear cress) protein is Histone-lysine N-methyltransferase ATXR5 (ATXR5).